A 710-amino-acid chain; its full sequence is Polyribonucleotide nucleotidyltransferase (710 aa).

Aspartate 488 and aspartate 494 together coordinate Mg(2+). The 61-residue stretch at 555 to 615 (PVIKVISIDP…EKVDAAIEQI (61 aa)) folds into the KH domain. The S1 motif domain occupies 625-688 (GDVFSGKVTR…NLGRLQLEEF (64 aa)). The tract at residues 688–710 (FSDSPDHKHGEKRSFKRHRKNDN) is disordered. A compositionally biased stretch (basic and acidic residues) spans 691-700 (SPDHKHGEKR). Residues 701-710 (SFKRHRKNDN) show a composition bias toward basic residues.

It belongs to the polyribonucleotide nucleotidyltransferase family. Mg(2+) is required as a cofactor.

Its subcellular location is the cytoplasm. It carries out the reaction RNA(n+1) + phosphate = RNA(n) + a ribonucleoside 5'-diphosphate. In terms of biological role, involved in mRNA degradation. Catalyzes the phosphorolysis of single-stranded polyribonucleotides processively in the 3'- to 5'-direction. This Pseudothermotoga lettingae (strain ATCC BAA-301 / DSM 14385 / NBRC 107922 / TMO) (Thermotoga lettingae) protein is Polyribonucleotide nucleotidyltransferase.